The following is a 694-amino-acid chain: Glycine--tRNA ligase beta subunit (694 aa).

The protein belongs to the class-II aminoacyl-tRNA synthetase family. As to quaternary structure, tetramer of two alpha and two beta subunits.

Its subcellular location is the cytoplasm. It catalyses the reaction tRNA(Gly) + glycine + ATP = glycyl-tRNA(Gly) + AMP + diphosphate. This is Glycine--tRNA ligase beta subunit from Moorella thermoacetica (strain ATCC 39073 / JCM 9320).